Consider the following 187-residue polypeptide: Elongation factor P (187 aa).

Belongs to the elongation factor P family.

The protein localises to the cytoplasm. The protein operates within protein biosynthesis; polypeptide chain elongation. Involved in peptide bond synthesis. Stimulates efficient translation and peptide-bond synthesis on native or reconstituted 70S ribosomes in vitro. Probably functions indirectly by altering the affinity of the ribosome for aminoacyl-tRNA, thus increasing their reactivity as acceptors for peptidyl transferase. The sequence is that of Elongation factor P from Mycoplasmopsis pulmonis (strain UAB CTIP) (Mycoplasma pulmonis).